Consider the following 311-residue polypeptide: MGLMAVLMLPLLLLGISGLLFIYQEASRLWSKSAVQNKVVVITDAISGLGKECARVFHAGGARLVLCGKNWEGLESLYATLTSVADPSKTFTPKLVLLDLSDISCVQDVAKEVLDCYGCVDILINNASVKVKGPAHKISLELDKKIMDANYFGPITLTKVLLPNMISRRTGQIVLVNNIQAKFGIPFRTAYAASKHAVMGFFDCLRAEVEEYDVVVSTVSPTFIRSYRASPEQRNWETSICKFFCRKLAYGVHPVEVAEEVMRTVRRKKQEVFMANPVPKAAVFIRTFFPEFFFAVVACGVKEKLNVPEEG.

An N-terminal signal peptide occupies residues 1 to 18 (MGLMAVLMLPLLLLGISG). The NAD(+) site is built by serine 47, leucine 49, tyrosine 191, lysine 195, and serine 226. Tyrosine 191 functions as the Proton acceptor in the catalytic mechanism.

This sequence belongs to the short-chain dehydrogenases/reductases (SDR) family. In terms of tissue distribution, expressed in skeletal muscle and cardiac muscle. Also expressed in liver, kidney, adipocytes and skin.

Its subcellular location is the sarcoplasmic reticulum membrane. The catalysed reaction is all-trans-retinol + NAD(+) = all-trans-retinal + NADH + H(+). Functionally, NADH-dependent oxidoreductase which catalyzes the oxidation of all-trans-retinol to all-trans-retinal. Plays a role in the regulation of cardiac and skeletal muscle metabolic functions. Maintains Ca(2+) intracellular homeostasis by repressing Ca(2+) release from the sarcoplasmic reticulum (SR) in myotubes, possibly through local alternations in NAD/NADH or retinol/retinal. Also plays a role in Ca(2+) homeostasis by controlling Ca(2+) overload in the cytosol and the SR in myotubes. Involved in glucose uptake into skeletal muscles and muscle performance by activating PI3K and mTORC2-mediated AKT1 phosphorylation signaling pathways, possibly through the action of its downstream catalytic product all-trans-retinoic acid. The sequence is that of Dehydrogenase/reductase SDR family member 7C from Mus musculus (Mouse).